The chain runs to 207 residues: Superoxide dismutase [Mn] (207 aa).

The Mn(2+) site is built by His27, His82, Asp169, and His173.

Belongs to the iron/manganese superoxide dismutase family. Mn(2+) is required as a cofactor.

It catalyses the reaction 2 superoxide + 2 H(+) = H2O2 + O2. Its function is as follows. Destroys superoxide anion radicals which are normally produced within the cells and which are toxic to biological systems. This is Superoxide dismutase [Mn] (sodA) from Yersinia enterocolitica.